A 199-amino-acid chain; its full sequence is ATP-dependent Clp protease proteolytic subunit (199 aa).

Serine 98 serves as the catalytic Nucleophile. The active site involves histidine 123.

Belongs to the peptidase S14 family. In terms of assembly, fourteen ClpP subunits assemble into 2 heptameric rings which stack back to back to give a disk-like structure with a central cavity, resembling the structure of eukaryotic proteasomes.

It localises to the cytoplasm. The catalysed reaction is Hydrolysis of proteins to small peptides in the presence of ATP and magnesium. alpha-casein is the usual test substrate. In the absence of ATP, only oligopeptides shorter than five residues are hydrolyzed (such as succinyl-Leu-Tyr-|-NHMec, and Leu-Tyr-Leu-|-Tyr-Trp, in which cleavage of the -Tyr-|-Leu- and -Tyr-|-Trp bonds also occurs).. Cleaves peptides in various proteins in a process that requires ATP hydrolysis. Has a chymotrypsin-like activity. Plays a major role in the degradation of misfolded proteins. The protein is ATP-dependent Clp protease proteolytic subunit of Ehrlichia chaffeensis (strain ATCC CRL-10679 / Arkansas).